Consider the following 141-residue polypeptide: ATP synthase epsilon chain (141 aa).

The protein belongs to the ATPase epsilon chain family. In terms of assembly, F-type ATPases have 2 components, CF(1) - the catalytic core - and CF(0) - the membrane proton channel. CF(1) has five subunits: alpha(3), beta(3), gamma(1), delta(1), epsilon(1). CF(0) has three main subunits: a, b and c.

Its subcellular location is the cell inner membrane. Functionally, produces ATP from ADP in the presence of a proton gradient across the membrane. The sequence is that of ATP synthase epsilon chain from Paraburkholderia phytofirmans (strain DSM 17436 / LMG 22146 / PsJN) (Burkholderia phytofirmans).